The primary structure comprises 303 residues: Aspartate carbamoyltransferase catalytic subunit (303 aa).

Carbamoyl phosphate contacts are provided by arginine 49 and threonine 50. Residue lysine 77 participates in L-aspartate binding. Residues arginine 99, histidine 126, and glutamine 129 each contribute to the carbamoyl phosphate site. L-aspartate is bound by residues arginine 159 and arginine 211. Carbamoyl phosphate contacts are provided by serine 252 and proline 253.

It belongs to the aspartate/ornithine carbamoyltransferase superfamily. ATCase family. Heterododecamer (2C3:3R2) of six catalytic PyrB chains organized as two trimers (C3), and six regulatory PyrI chains organized as three dimers (R2).

It catalyses the reaction carbamoyl phosphate + L-aspartate = N-carbamoyl-L-aspartate + phosphate + H(+). It participates in pyrimidine metabolism; UMP biosynthesis via de novo pathway; (S)-dihydroorotate from bicarbonate: step 2/3. Functionally, catalyzes the condensation of carbamoyl phosphate and aspartate to form carbamoyl aspartate and inorganic phosphate, the committed step in the de novo pyrimidine nucleotide biosynthesis pathway. In Listeria monocytogenes serovar 1/2a (strain ATCC BAA-679 / EGD-e), this protein is Aspartate carbamoyltransferase catalytic subunit.